A 141-amino-acid chain; its full sequence is Hemoglobin subunit alpha-1/2 (141 aa).

Positions 1–141 (VLSPTDKTNV…VSTVLTSKYR (141 aa)) constitute a Globin domain. At Ser3 the chain carries Phosphoserine. Position 7 is an N6-succinyllysine (Lys7). At Thr8 the chain carries Phosphothreonine. Lys11 carries the N6-succinyllysine modification. Lys16 carries the post-translational modification N6-acetyllysine; alternate. Lys16 carries the N6-succinyllysine; alternate modification. Residue Tyr24 is modified to Phosphotyrosine. The residue at position 40 (Lys40) is an N6-succinyllysine. Ser49 is modified (phosphoserine). His58 serves as a coordination point for O2. His87 lines the heme b pocket. At Ser102 the chain carries Phosphoserine. Phosphothreonine is present on Thr108. The residue at position 124 (Ser124) is a Phosphoserine. Phosphothreonine occurs at positions 134 and 137. A Phosphoserine modification is found at Ser138.

Belongs to the globin family. In terms of assembly, heterotetramer of two alpha chains and two beta chains. As to expression, red blood cells.

In terms of biological role, involved in oxygen transport from the lung to the various peripheral tissues. The polypeptide is Hemoglobin subunit alpha-1/2 (Tapirus terrestris (Lowland tapir)).